The primary structure comprises 291 residues: 33 kDa chaperonin (291 aa).

Intrachain disulfides connect C229/C231 and C262/C265.

Belongs to the HSP33 family. In terms of processing, under oxidizing conditions two disulfide bonds are formed involving the reactive cysteines. Under reducing conditions zinc is bound to the reactive cysteines and the protein is inactive.

It is found in the cytoplasm. In terms of biological role, redox regulated molecular chaperone. Protects both thermally unfolding and oxidatively damaged proteins from irreversible aggregation. Plays an important role in the bacterial defense system toward oxidative stress. The polypeptide is 33 kDa chaperonin (Vibrio vulnificus (strain YJ016)).